Reading from the N-terminus, the 360-residue chain is MLVYLAEYLTRFHTGFNVFSYVTFRAILGLLTALVFSLWFGPKLIERLQLLQIGQVVRNDGPESHFSKRGTPTMGGLLILAAIFISVLLWGDLGSRYVWVMLFVLGSFGLIGFIDDYRKVVRKDTKGLIARWKYILQSLAALLIAFFLYATAANPGETQLVVPFFKDVMPQLGAVFIVLAYFTIVGASNAVNLTDGLDGLAIMPTVMVAAAFALIAYLSGHAQFANYLHIPHLPGSGELVIVCTAIVGAGLGFLWFNTYPAQVFMGDVGSLSLGAALGTIAVLVRQEILLVIMGGVFVMETLSVILQVGSYKLRGQRIFRMAPIHHHYELKGWPEPRVIVRFWIISIFLVLLGLATLKLR.

10 helical membrane-spanning segments follow: residues 26–46 (AILG…KLIE), 74–94 (MGGL…GDLG), 97–117 (YVWV…IDDY), 134–154 (YILQ…TAAN), 168–188 (VMPQ…VGAS), 199–219 (GLAI…AYLS), 236–256 (SGEL…FLWF), 263–283 (VFMG…IAVL), 288–308 (ILLV…ILQV), and 338–358 (VIVR…ATLK).

The protein belongs to the glycosyltransferase 4 family. MraY subfamily. It depends on Mg(2+) as a cofactor.

It is found in the cell inner membrane. It catalyses the reaction UDP-N-acetyl-alpha-D-muramoyl-L-alanyl-gamma-D-glutamyl-meso-2,6-diaminopimeloyl-D-alanyl-D-alanine + di-trans,octa-cis-undecaprenyl phosphate = di-trans,octa-cis-undecaprenyl diphospho-N-acetyl-alpha-D-muramoyl-L-alanyl-D-glutamyl-meso-2,6-diaminopimeloyl-D-alanyl-D-alanine + UMP. It functions in the pathway cell wall biogenesis; peptidoglycan biosynthesis. In terms of biological role, catalyzes the initial step of the lipid cycle reactions in the biosynthesis of the cell wall peptidoglycan: transfers peptidoglycan precursor phospho-MurNAc-pentapeptide from UDP-MurNAc-pentapeptide onto the lipid carrier undecaprenyl phosphate, yielding undecaprenyl-pyrophosphoryl-MurNAc-pentapeptide, known as lipid I. The chain is Phospho-N-acetylmuramoyl-pentapeptide-transferase from Shewanella baltica (strain OS185).